The following is a 122-amino-acid chain: MIQQQTYLNVADNSGARKLMCLRVLSTGNCRYGGIGDQIIAVVKEAIPNMGVKKSDVVRAVIVRTRQPLRRASGMSIRFDDNAAVIINAEGNPKGTRVFGPVARELRDKNFTKIVSLAPEVI.

It belongs to the universal ribosomal protein uL14 family. As to quaternary structure, part of the 50S ribosomal subunit. Forms a cluster with proteins L3 and L19. In the 70S ribosome, L14 and L19 interact and together make contacts with the 16S rRNA in bridges B5 and B8.

Functionally, binds to 23S rRNA. Forms part of two intersubunit bridges in the 70S ribosome. The chain is Large ribosomal subunit protein uL14 from Picosynechococcus sp. (strain ATCC 27264 / PCC 7002 / PR-6) (Agmenellum quadruplicatum).